The chain runs to 205 residues: Adenylyl-sulfate kinase (205 aa).

31 to 38 provides a ligand contact to ATP; that stretch reads GLSGAGKS. S105 acts as the Phosphoserine intermediate in catalysis.

It belongs to the APS kinase family.

The catalysed reaction is adenosine 5'-phosphosulfate + ATP = 3'-phosphoadenylyl sulfate + ADP + H(+). The protein operates within sulfur metabolism; hydrogen sulfide biosynthesis; sulfite from sulfate: step 2/3. Catalyzes the synthesis of activated sulfate. The sequence is that of Adenylyl-sulfate kinase from Shewanella baltica (strain OS155 / ATCC BAA-1091).